Consider the following 867-residue polypeptide: MLSPNDKMLGKLDPFYQPSVSKQKTSAEIISEARNALRTVRTQRPFTPQEAQRKLFGPASSRTSENRPPSSFSLHASSFESSDSRPISGTRLSPLELKPKVPASPTREEDSCFSFPKPPVDPAKIRRVSNARARLFRAASQRALLPDRSLPPSDSKKTVESKETVMMGDSMVKINGIYLTKSNAICHLKSHPLQLTDDGGFSEIKEQEMFKGTTSLPSHLKNGGDQGKRHARASSCPSSSDLSRLQTKAVPKADLQEEDAEIEVDEVFWNTRIVPILRELEKEENIETVCAACTQLHHALEEGNMLGNKFKGRSILLKTLCKLVDVGSDSLSLKLAKIILALKVSRKNLLNVCKLIFKISRNEKNDSLIQNDSILESLLEVLRSEDLQTNMEAFLYCMGSIKFISGNLGFLNEMISKGAVEILINLIKQINENIKKCGTFLPNSGHLLVQVTATLRNLVDSSLVRSKFLNISALPQLCTAMEQYKGDKDVCTNIARIFSKLTSYRDCCTALASYSRCYALFLNLINKYQKKQDLVVRVVFILGNLTAKNNQAREQFSKEKGSIQTLLSLFQTFHQLDLHSQKPVGQRGEQHRAQRPPSEAEDVLIKLTRVLANIAIHPGVGPVLAANPGIVGLLLTTLEYKSLDDCEELVINATATINNLSYYQVKNSIIQDKKLYIAELLLKLLVSNNMDGILEAVRVFGNLSQDHDVCDFIVQNNVHRFMMALLDAQHQDICFSACGVLLNLTVDKDKRVILKEGGGIKKLVDCLRDLGPTDWQLACLVCKTLWNFSENITNASSCFGNEDTNTLLLLLSSFLDEELALDGSFDPDLKNYHKLHWETEFKPVAQQLLNRIQRHHTFLEPLPIPSF.

Disordered regions lie at residues 1–115 (MLSP…CFSF) and 214–252 (TSLPSHLKNGGDQGKRHARASSCPSSSDLSRLQTKAVPK). 3 stretches are compositionally biased toward polar residues: residues 18 to 28 (PSVSKQKTSAE), 40 to 50 (VRTQRPFTPQE), and 60 to 69 (SSRTSENRPP). 2 stretches are compositionally biased toward low complexity: residues 70-81 (SSFSLHASSFES) and 234-243 (SSCPSSSDLS). ARM repeat units lie at residues 262–301 (IEVDEVFWNTRIVPILRELEKEENIETVCAACTQLHHALE), 304–344 (NMLG…ALKV), 363–403 (EKND…SIKF), 408–449 (LGFL…HLLV), 462–503 (SLVR…KLTS), 506–547 (DCCT…NLTA), 551–589 (QAREQFSKEKGSIQTLLSLFQTFHQLDLHSQKPVGQRGE), 591–616 (HRAQRPPSEAEDVLIKLTRVLANIAI), 619–662 (GVGP…NLSY), 664–705 (QVKN…NLSQ), 707–746 (HDVCDFIVQNNVHRFMMALLDAQHQDICFSACGVLLNLTV), and 748–790 (KDKR…NFSE).

In terms of tissue distribution, expressed at higher level in testis.

Functionally, required for sperm flagellum axoneme organization and function. Involved in axonemal central pair complex assembly and/or stability. In Homo sapiens (Human), this protein is Armadillo repeat-containing protein 2.